The sequence spans 224 residues: Ribose-5-phosphate isomerase A 1 (224 aa).

Residues Ser-29 to Thr-32, Asp-85 to Asp-88, and Lys-98 to Gly-101 contribute to the substrate site. Glu-107 functions as the Proton acceptor in the catalytic mechanism. Substrate is bound at residue Lys-125.

The protein belongs to the ribose 5-phosphate isomerase family. Homodimer.

The enzyme catalyses aldehydo-D-ribose 5-phosphate = D-ribulose 5-phosphate. It functions in the pathway carbohydrate degradation; pentose phosphate pathway; D-ribose 5-phosphate from D-ribulose 5-phosphate (non-oxidative stage): step 1/1. Catalyzes the reversible conversion of ribose-5-phosphate to ribulose 5-phosphate. The sequence is that of Ribose-5-phosphate isomerase A 1 from Oceanobacillus iheyensis (strain DSM 14371 / CIP 107618 / JCM 11309 / KCTC 3954 / HTE831).